Reading from the N-terminus, the 448-residue chain is Asparagine--tRNA ligase (448 aa).

The protein belongs to the class-II aminoacyl-tRNA synthetase family. Homodimer.

It localises to the cytoplasm. It catalyses the reaction tRNA(Asn) + L-asparagine + ATP = L-asparaginyl-tRNA(Asn) + AMP + diphosphate + H(+). In Streptococcus pyogenes serotype M12 (strain MGAS9429), this protein is Asparagine--tRNA ligase.